Reading from the N-terminus, the 996-residue chain is KK-1 biosynthesis cluster protein D (996 aa).

Disordered regions lie at residues 307–333 (HDTD…PELD), 425–449 (EQDN…ARDL), 489–556 (AGVA…ALRA), and 571–602 (STHS…SLHS). Polar residues-rich tracts occupy residues 318–329 (PIRSNKLSQSKQ) and 428–439 (NQTNEEGTGEVQ). Composition is skewed to basic and acidic residues over residues 440–449 (SQRDRRARDL) and 500–527 (RAAE…DKAA). Positions 572-590 (THSIHQRASVNTTAPTVAR) are enriched in polar residues.

The protein operates within secondary metabolite biosynthesis. Part of the gene cluster that mediates the biosynthesis of KK-1, a novel cyclic depsipeptide with 10 residues which is a promising active compound with high activity against many plant pathogens, especially Botrytis cinerea. The role of kk1D in KK-1 biosynthesis has still to be determined. The nonribosomal peptide synthetase (NRPS) kk1B catalyzes the elongation and cyclization of the decapeptide chain composed of 1 D-lactic acid residue (D-Lac), 1 pipecolic acid residue (Pip), 1 aspartic acid residue (Asp), 1 isoleucine residue (Ile), 1 glycine residue (Gly), 1 tyrosine residue (Tyr) and 4 valine residues (Val). The Asp, Ile and 3 Val residues are N-methylated by the 5 methyltransferase domains from the NRPS (found in modules 3, 5, 6, 7 and 9), whereas the Tyr residue is O-methylated by the cluster encoded O-methyltransferase kk1A. The thioesterase kk1J is likely to be involved in the corrective mechanism of peptide chain synthesis. The D-lactate dehydrogenase kk1H is involved in the synthesis of D-lactic acid from pyruvic acid, which is recognized by the A domain of the first kk1B module. The pyrroline-5-carboxylate reductase kk1I is involved in the synthesis of the L-pipecolic acid residue of KK-1 from delta-1-pyrroline-5-carboxylate (P5C), a metabolic intermediate of lysine. It is still unclear how kk1C and kk1D are involved in the production of KK-1. The polypeptide is KK-1 biosynthesis cluster protein D (Curvularia clavata).